The chain runs to 92 residues: Small ribosomal subunit protein uS19 (92 aa).

It belongs to the universal ribosomal protein uS19 family.

Its function is as follows. Protein S19 forms a complex with S13 that binds strongly to the 16S ribosomal RNA. The protein is Small ribosomal subunit protein uS19 of Bacillus cytotoxicus (strain DSM 22905 / CIP 110041 / 391-98 / NVH 391-98).